A 1509-amino-acid polypeptide reads, in one-letter code: ABC transporter G family member 5 (1509 aa).

Over residues 1–10 (MVKQDPRDKS) the composition is skewed to basic and acidic residues. Residues 1–70 (MVKQDPRDKS…NNNNNNIKHK (70 aa)) are disordered. A compositionally biased stretch (polar residues) spans 11-28 (SYSPNLSIPINNQEEPTL). Low complexity predominate over residues 29-66 (NNNNNNNNNNNNNNNNNNNNNNNNNNNNNNNKNNNNNN). The region spanning 129 to 376 (VYCRNATYTV…FKKLGFACPS (248 aa)) is the ABC transporter 1 domain. ATP is bound at residue 168–175 (GTPGCGKS). The 277-residue stretch at 472 to 748 (SRNYYNFATR…SVCFFALKYL (277 aa)) folds into the ABC transmembrane type-2 1 domain. Helical transmembrane passes span 477-497 (NFATRVFKGIFFGLLLGTLYW), 512-532 (LLFFIMTTIIFSSFAAVNSFF), 557-577 (IICDIPAGLIEVAFFGPIVYW), 583-603 (PVFIRFVYFMILLFITDNLSL), 616-636 (IEIANVTASVILSIWLLFSGF), 643-663 (IGGWWIWLYYISPYTWIFQGL), and 725-745 (IVYAILGAYIVFFYSVCFFAL). Over residues 813–831 (PLTSPNYNNNNNLSGSGNN) the composition is skewed to low complexity. Positions 813–881 (PLTSPNYNNN…PISTSQKDIS (69 aa)) are disordered. Residues 839–881 (TPSTLSPMVNSPLTNLSPMVNTPSKNGNHSKQKPISTSQKDIS) show a composition bias toward polar residues. An ABC transporter 2 domain is found at 888–1141 (LQFKKLCYAV…VILDYCDKLG (254 aa)). 935–942 (GPSGAGKS) serves as a coordination point for ATP. An ABC transmembrane type-2 2 domain is found at 1231 to 1504 (LRRPAIFVSN…GLSFWGFKKV (274 aa)). 6 consecutive transmembrane segments (helical) span residues 1236-1256 (IFVSNCLRSILLAVLLGTLFV), 1271-1291 (LLFFSFLFAGMVAIGNIPTTV), 1320-1340 (YPFILSTGILYIIPTFWIAGL), 1352-1372 (CLFIFIITYIMYDAFALCLAV), 1379-1399 (MASTICGIGLSLATLFGGFVI), and 1481-1501 (IDIAAIFGYIFIFVGLSFWGF).

Belongs to the ABC transporter superfamily. ABCG family. PDR (TC 3.A.1.205) subfamily.

It is found in the membrane. The protein is ABC transporter G family member 5 (abcG5) of Dictyostelium discoideum (Social amoeba).